Here is a 93-residue protein sequence, read N- to C-terminus: MATHKPINILEAFAAAPPPLDYVLPNMVAGTVGALVSPGGAGKSMLALQLAAQIAGGPDLLEVGELPTGPVIYLPAEDPPTAIHHRLHALGAH.

This protein is involved in regulating the plasmid copy-number. Increasing the level of this protein results in a higher plasmid copy-number. This chain is Regulatory protein RepI (repI), found in Escherichia coli.